Here is a 5538-residue protein sequence, read N- to C-terminus: Leashin (5538 aa).

Gly residues predominate over residues 1-10; that stretch reads MFRALMGGGR. Disordered stretches follow at residues 1–270, 286–315, 331–365, 510–555, 596–712, 800–901, 913–944, 1027–1145, 1164–1297, 1310–1398, 1432–1993, 2067–2146, 2165–2207, 2233–3065, 3077–3894, 3910–4034, 4072–4128, 4238–4421, 4442–4463, 4509–4698, 4733–4850, and 4910–5052; these read MFRA…SSMG, EVDP…TFGI, LPLP…PHTH, SRDA…KKSS, TESV…DISQ, AATS…FPTG, ALAS…PVPT, NRPH…KDSF, VLSG…GYRD, PTPP…RYVS, EDPT…TSVE, SELL…VNAF, NRLS…SPPA, PEAA…SQPI, MAEE…EIVS, EEKA…DTGL, KFKQ…EEPL, EAAL…SNQA, PRPL…DEND, LRRQ…TSNT, KTDG…VEQA, and ALTV…RHRR. Residues 1–1100 form a woronin bodies-binding region region; it reads MFRALMGGGR…RASGVQLIDR (1100 aa). Low complexity predominate over residues 14–23; that stretch reads SRSTTSSSKS. Composition is skewed to basic and acidic residues over residues 42 to 51 and 89 to 167; these read SRGDDRDRGL and VEHD…ERSR. Polar residues predominate over residues 299–313; the sequence is AGTTSEPPKPSNTTF. The segment covering 334 to 352 has biased composition (pro residues); the sequence is PASPTSPPEPVPTTAPYAP. The segment covering 514-523 has biased composition (basic residues); it reads PRKHHYRQRR. Positions 598–607 are enriched in polar residues; sequence SVSTARRSQT. Residues 639-655 are compositionally biased toward basic residues; it reads HRSRSRSHSSSRNRRHS. The span at 660–674 shows a compositional bias: low complexity; it reads AAVGAAVGSGAIALA. Over residues 682-698 the composition is skewed to basic residues; the sequence is SRSRSRSRFPRKSKGRK. Residues 809–825 show a composition bias toward basic and acidic residues; it reads RAGEILVAKETRSRHSD. Composition is skewed to low complexity over residues 842 to 851 and 862 to 880; these read GDQSSSSVSS and GSDE…GWRW. Residues 881–891 show a composition bias toward basic residues; sequence GSKKNKKKKRA. 8 stretches are compositionally biased toward basic and acidic residues: residues 1068 to 1091, 1098 to 1145, 1178 to 1198, 1207 to 1226, 1356 to 1365, 1375 to 1387, 1447 to 1462, and 1478 to 1488; these read LTKE…DAER, IDRD…KDSF, SQRR…RGSE, SKSE…RQPE, WGEHKTHEYE, SVDH…REQP, GRVE…ESKS, and EEKAPSSRVIE. Over residues 1506-1516 the composition is skewed to low complexity; it reads QESSEPQTRTS. Composition is skewed to basic and acidic residues over residues 1521 to 1536, 1549 to 1559, and 1572 to 1594; these read VIDR…DGSR, GKERDESELRA, and EELR…DRRS. Residues 1639 to 1648 show a composition bias toward basic residues; the sequence is KKKRRKRRSK. 3 stretches are compositionally biased toward basic and acidic residues: residues 1672–1686, 1700–1773, and 1788–1800; these read EKLK…EKKA, EPVD…QRRE, and KSGE…KLSE. Composition is skewed to low complexity over residues 1867–1876 and 1889–1898; these read PAPRSRSRPA and SQSSRRSSIL. The span at 1950 to 1975 shows a compositional bias: basic and acidic residues; it reads KNSREMRPLWLVERHGPGHGEHKLEE. 2 stretches are compositionally biased toward polar residues: residues 1984-1993 and 2121-2130; these read KTSSANTSVE and TPQNNVTAAS. Basic and acidic residues-rich tracts occupy residues 2187–2196, 2269–2279, and 2307–2320; these read DADRTHKPIA, VPRDDKRRDSV, and GENK…KNEN. Over residues 2321 to 2331 the composition is skewed to polar residues; that stretch reads ANDNSQAQTEQ. The segment covering 2344–2355 has biased composition (basic residues); it reads AKKKKKKNKKKR. Residues 2358–2370 show a composition bias toward polar residues; that stretch reads MDSNTQEPTTPVD. Residues 2427–2441 show a composition bias toward basic and acidic residues; sequence DVEKAIEAPDVRKEL. Residues 2449 to 2461 are compositionally biased toward low complexity; that stretch reads APEDTPAEPTAET. The span at 2473–2484 shows a compositional bias: basic residues; the sequence is KKSKKKKKKKNK. The segment covering 2494–2525 has biased composition (polar residues); sequence DPASTETPEASAANSQVVAAEQVESTLETTQP. Basic and acidic residues-rich tracts occupy residues 2580–2590, 2647–2661, and 2677–2691; these read NQAKELPHPEE, PEDK…DLKS, and ALDK…RPAE. The span at 2719 to 2734 shows a compositional bias: low complexity; that stretch reads EEPTPTAAELETPLSR. Over residues 2735–2747 the composition is skewed to basic residues; that stretch reads KNSKKNKKKNKRK. The segment covering 2796–2812 has biased composition (basic and acidic residues); that stretch reads DENKGESRDVQAVKEET. Basic residues predominate over residues 2874-2884; it reads KKKAKKKKNRK. Residues 2885 to 2894 are compositionally biased toward polar residues; the sequence is TANVSESQPE. 2 stretches are compositionally biased toward basic residues: residues 3003 to 3013 and 3089 to 3100; these read KKSKKNKKKKQ and KKTKKEKKKKRQ. Positions 3145–3172 are enriched in basic and acidic residues; the sequence is AIEHAEAAAEHSQEQPNKDVTLHADHSP. The span at 3248–3268 shows a compositional bias: low complexity; it reads PAMEGGAAAEELVAVEPDVLE. The span at 3293–3303 shows a compositional bias: polar residues; sequence ELVNAETTQKT. Residues 3329 to 3341 show a composition bias toward basic residues; it reads SKKKDKKKKKKRQ. The segment covering 3347-3367 has biased composition (basic and acidic residues); the sequence is DEQRSSTKEEPTAEFSSDHVP. Low complexity-rich tracts occupy residues 3397 to 3409 and 3422 to 3435; these read TQTA…SSAS and ESTQ…AQTA. A compositionally biased stretch (basic residues) spans 3436–3450; sequence KSKKKAKKDKKKRKS. Over residues 3480–3495 the composition is skewed to basic and acidic residues; sequence EGPKPGDKPTSPKDSS. Positions 3547–3564 are enriched in low complexity; the sequence is EEQAVVEETVAPPVVDEA. Composition is skewed to polar residues over residues 3565 to 3580 and 3604 to 3613; these read SQLQ…LWSE and VSPSLENNEG. 2 stretches are compositionally biased toward basic residues: residues 3642 to 3652 and 3716 to 3730; these read KSKKNKKKKKR and KAKK…KRQS. The span at 3768-3787 shows a compositional bias: polar residues; the sequence is TFSQETSETISTEAKSSEPS. Residues 3800–3819 show a composition bias toward basic and acidic residues; sequence KENQSHDTEPHGGNDKDLTW. A compositionally biased stretch (polar residues) spans 3823–3837; sequence MVSSQVEQQQGTPSD. A compositionally biased stretch (basic and acidic residues) spans 3876-3893; sequence DRLERSGEEGTRVKKEIV. Polar residues-rich tracts occupy residues 3915-3925 and 3965-3980; these read ISSQGEDTIQV and KDQF…SQSK. A compositionally biased stretch (acidic residues) spans 4010–4020; that stretch reads TSQDDSVDAVQ. Residues 4111-4123 show a composition bias toward basic and acidic residues; it reads ESRENKFKEKQLA. Basic residues predominate over residues 4244-4255; it reads KNSKKKSKKAKK. Over residues 4328 to 4345 the composition is skewed to polar residues; it reads LGQTPNMDNQTDDVQSTE. The segment covering 4378–4391 has biased composition (basic residues); sequence KLSKKDRRKAKKKS. Residues 4392-4406 are compositionally biased toward basic and acidic residues; that stretch reads AKDAIEPSDEPELRN. Residues 4495–5538 are septal pore-binding region; it reads AIAEFDETAI…SSTMDISNVI (1044 aa). Polar residues predominate over residues 4554-4570; it reads TEQSAGLQAKSVSSQGA. Basic and acidic residues-rich tracts occupy residues 4574-4591 and 4660-4673; these read IQDD…DQTK and EESH…EKGP. The segment covering 4940–4954 has biased composition (low complexity); that stretch reads SSVSSVKSVQSTHSV. A compositionally biased stretch (polar residues) spans 4966 to 4988; it reads RNTSGDLRAASQAQESHGTQPHA. Positions 4989 to 4998 are enriched in pro residues; it reads TPQPPQPPPS. Positions 5050 to 5223 form a coiled coil; that stretch reads HRRSMQHLQE…QQQIAASLHD (174 aa).

In terms of assembly, binds directly or indirectly to the Woronin body major protein hexA.

Its subcellular location is the cell septum. Acts as the tether and is essential for anchoring of Woronin bodies at the septal pore. In damaged hyphae, Woronin bodies occlude septal pores in order to separate intact from damaged compartments. In Aspergillus fumigatus (strain ATCC MYA-4609 / CBS 101355 / FGSC A1100 / Af293) (Neosartorya fumigata), this protein is Leashin.